The chain runs to 370 residues: Dihydroorotate dehydrogenase (quinone) (370 aa).

FMN-binding positions include 67-71 and Thr91; that span reads AGFDK. Residue Lys71 coordinates substrate. 116–120 provides a ligand contact to substrate; the sequence is NRMGF. The FMN site is built by Asn146 and Asn179. Position 179 (Asn179) interacts with substrate. Ser182 (nucleophile) is an active-site residue. Asn184 is a substrate binding site. Residues Lys222 and Thr250 each coordinate FMN. A substrate-binding site is contributed by 251 to 252; the sequence is NT. FMN-binding positions include Gly276, Gly305, and 326–327; that span reads YS.

It belongs to the dihydroorotate dehydrogenase family. Type 2 subfamily. As to quaternary structure, monomer. FMN is required as a cofactor.

It localises to the cell membrane. The enzyme catalyses (S)-dihydroorotate + a quinone = orotate + a quinol. Its pathway is pyrimidine metabolism; UMP biosynthesis via de novo pathway; orotate from (S)-dihydroorotate (quinone route): step 1/1. Its function is as follows. Catalyzes the conversion of dihydroorotate to orotate with quinone as electron acceptor. This chain is Dihydroorotate dehydrogenase (quinone), found in Streptomyces griseus subsp. griseus (strain JCM 4626 / CBS 651.72 / NBRC 13350 / KCC S-0626 / ISP 5235).